Reading from the N-terminus, the 123-residue chain is MIQMQSMLDAADNSGARSVMCIKVLGGSHRRYAHIGDVIKVTVKEAIPRGKVKKGDVLKAVVVRTRKGVRRPDGSVIRFDRNACVLLNNNTEQPIGTRIFGPVTRELRGDKFMKIVSLAPEVL.

The protein belongs to the universal ribosomal protein uL14 family. Part of the 50S ribosomal subunit. Forms a cluster with proteins L3 and L19. In the 70S ribosome, L14 and L19 interact and together make contacts with the 16S rRNA in bridges B5 and B8.

In terms of biological role, binds to 23S rRNA. Forms part of two intersubunit bridges in the 70S ribosome. In Vibrio vulnificus (strain CMCP6), this protein is Large ribosomal subunit protein uL14.